Consider the following 119-residue polypeptide: MKIALIAHDKKKEDIIEFSKKYKDVLAKYELVATGTTGTKISEATGLEVKRYLSGPYGGDQQLGGRIAEGKIDLVIFFTDPLTAQPHEPDVSALLRVCNVHNVAVVTNIKTAELIIKQF.

The MGS-like domain maps to 1–119 (MKIALIAHDK…KTAELIIKQF (119 aa)). Residues His-8, Lys-12, 34–37 (TGTT), and 54–55 (SG) contribute to the substrate site. The active-site Proton donor/acceptor is Asp-60. His-87 contributes to the substrate binding site.

Belongs to the methylglyoxal synthase family.

It carries out the reaction dihydroxyacetone phosphate = methylglyoxal + phosphate. In terms of biological role, catalyzes the formation of methylglyoxal from dihydroxyacetone phosphate. The sequence is that of Methylglyoxal synthase from Clostridium beijerinckii (strain ATCC 51743 / NCIMB 8052) (Clostridium acetobutylicum).